The primary structure comprises 298 residues: Inosose dehydratase (298 aa).

The protein belongs to the IolE/MocC family. The cofactor is glutathione. It depends on Co(2+) as a cofactor. Requires Mn(2+) as cofactor.

The enzyme catalyses scyllo-inosose = 3D-3,5/4-trihydroxycyclohexane-1,2-dione + H2O. The protein operates within polyol metabolism; myo-inositol degradation into acetyl-CoA; acetyl-CoA from myo-inositol: step 2/7. In terms of biological role, catalyzes the dehydration of inosose (2-keto-myo-inositol, 2KMI or 2,4,6/3,5-pentahydroxycyclohexanone) to 3D-(3,5/4)-trihydroxycyclohexane-1,2-dione (D-2,3-diketo-4-deoxy-epi-inositol). The protein is Inosose dehydratase of Clostridium botulinum (strain Eklund 17B / Type B).